Reading from the N-terminus, the 518-residue chain is Protein nucleotidyltransferase YdiU (518 aa).

Over residues M1 to L10 the composition is skewed to basic and acidic residues. The tract at residues M1–R23 is disordered. Positions 100, 102, 103, 123, 135, 136, 193, and 200 each coordinate ATP. D270 acts as the Proton acceptor in catalysis. N271 and D280 together coordinate Mg(2+). D280 serves as a coordination point for ATP.

The protein belongs to the SELO family. Mg(2+) is required as a cofactor. Mn(2+) serves as cofactor.

The catalysed reaction is L-seryl-[protein] + ATP = 3-O-(5'-adenylyl)-L-seryl-[protein] + diphosphate. It catalyses the reaction L-threonyl-[protein] + ATP = 3-O-(5'-adenylyl)-L-threonyl-[protein] + diphosphate. The enzyme catalyses L-tyrosyl-[protein] + ATP = O-(5'-adenylyl)-L-tyrosyl-[protein] + diphosphate. It carries out the reaction L-histidyl-[protein] + UTP = N(tele)-(5'-uridylyl)-L-histidyl-[protein] + diphosphate. The catalysed reaction is L-seryl-[protein] + UTP = O-(5'-uridylyl)-L-seryl-[protein] + diphosphate. It catalyses the reaction L-tyrosyl-[protein] + UTP = O-(5'-uridylyl)-L-tyrosyl-[protein] + diphosphate. Functionally, nucleotidyltransferase involved in the post-translational modification of proteins. It can catalyze the addition of adenosine monophosphate (AMP) or uridine monophosphate (UMP) to a protein, resulting in modifications known as AMPylation and UMPylation. This is Protein nucleotidyltransferase YdiU from Xanthomonas axonopodis pv. citri (strain 306).